The chain runs to 386 residues: Succinate--CoA ligase [ADP-forming] subunit beta (386 aa).

The 236-residue stretch at Lys-9–Glu-244 folds into the ATP-grasp domain. ATP-binding positions include Lys-46, Gly-53–Gly-55, Glu-99, Cys-102, and Glu-107. 2 residues coordinate Mg(2+): Asn-199 and Asp-213. Substrate is bound by residues Asn-264 and Gly-321 to Met-323.

The protein belongs to the succinate/malate CoA ligase beta subunit family. In terms of assembly, heterotetramer of two alpha and two beta subunits. Mg(2+) is required as a cofactor.

The catalysed reaction is succinate + ATP + CoA = succinyl-CoA + ADP + phosphate. It carries out the reaction GTP + succinate + CoA = succinyl-CoA + GDP + phosphate. It participates in carbohydrate metabolism; tricarboxylic acid cycle; succinate from succinyl-CoA (ligase route): step 1/1. In terms of biological role, succinyl-CoA synthetase functions in the citric acid cycle (TCA), coupling the hydrolysis of succinyl-CoA to the synthesis of either ATP or GTP and thus represents the only step of substrate-level phosphorylation in the TCA. The beta subunit provides nucleotide specificity of the enzyme and binds the substrate succinate, while the binding sites for coenzyme A and phosphate are found in the alpha subunit. This is Succinate--CoA ligase [ADP-forming] subunit beta from Bacillus pumilus (strain SAFR-032).